We begin with the raw amino-acid sequence, 83 residues long: Retinal cone rhodopsin-sensitive cGMP 3',5'-cyclic phosphodiesterase subunit gamma (83 aa).

The tract at residues 1 to 51 (MSDSPCLSPPAPSQGPTTPRKGPPKFKQRQTRQFKSKPPKKGVKGFGDDIP) is disordered. The segment covering 22–43 (GPPKFKQRQTRQFKSKPPKKGV) has biased composition (basic residues).

The protein belongs to the rod/cone cGMP-PDE gamma subunit family. Tetramer composed of two catalytic chains (alpha and beta), and two inhibitory chains (gamma).

It catalyses the reaction 3',5'-cyclic GMP + H2O = GMP + H(+). Its function is as follows. Participates in processes of transmission and amplification of the visual signal. cGMP-PDEs are the effector molecules in G-protein-mediated phototransduction in vertebrate rods and cones. This is Retinal cone rhodopsin-sensitive cGMP 3',5'-cyclic phosphodiesterase subunit gamma (Pde6h) from Rattus norvegicus (Rat).